We begin with the raw amino-acid sequence, 190 residues long: Dynein axonemal light chain 1 (190 aa).

The residue at position 2 (A2) is an N-acetylalanine. LRR repeat units follow at residues 49–70 (NCEK…NGLK), 71–92 (NLRI…EAVG), 94–115 (TLEE…HVMK), and 116–137 (KLKI…LKLA). Residue S56 is modified to Phosphoserine. The LRRCT domain maps to 150–190 (NPLEEKHSAEGNWIDEATKRVPKLKKLDGTPVIKEDEEEES).

This sequence belongs to the dynein light chain LC1-type family. As to quaternary structure, interacts with ZMYND10 (via C-terminus). Interacts with DNAH5, a outer arm dynein heavy chain. Interacts with tubulin located within the A-tubule of the outer doublets in a ATP-independent manner. Expressed in the respiratory epithelium of the upper airways and the ependymal cells lining the brain ventricles.

It localises to the cytoplasm. Its subcellular location is the cytoskeleton. It is found in the cilium axoneme. Its function is as follows. Part of the multisubunit axonemal ATPase complexes that generate the force for cilia motility and govern beat frequency. Component of the outer arm dynein (ODA). May be involved in a mechanosensory feedback mechanism controlling ODA activity based on external conformational cues by tethering the outer arm dynein heavy chain (DNAH5) to the microtubule within the axoneme. Important for ciliary function in the airways and for the function of the cilia that produce the nodal flow essential for the determination of the left-right asymmetry. This Mus musculus (Mouse) protein is Dynein axonemal light chain 1 (Dnal1).